Reading from the N-terminus, the 561-residue chain is Dihydroxy-acid dehydratase (561 aa).

A [2Fe-2S] cluster-binding site is contributed by C50. D82 contributes to the Mg(2+) binding site. C123 lines the [2Fe-2S] cluster pocket. Mg(2+) is bound by residues D124 and K125. Residue K125 is modified to N6-carboxylysine. Residue C195 participates in [2Fe-2S] cluster binding. Mg(2+) is bound at residue E447. S473 serves as the catalytic Proton acceptor.

Belongs to the IlvD/Edd family. Homodimer. It depends on [2Fe-2S] cluster as a cofactor. Mg(2+) serves as cofactor.

The enzyme catalyses (2R)-2,3-dihydroxy-3-methylbutanoate = 3-methyl-2-oxobutanoate + H2O. It carries out the reaction (2R,3R)-2,3-dihydroxy-3-methylpentanoate = (S)-3-methyl-2-oxopentanoate + H2O. It functions in the pathway amino-acid biosynthesis; L-isoleucine biosynthesis; L-isoleucine from 2-oxobutanoate: step 3/4. It participates in amino-acid biosynthesis; L-valine biosynthesis; L-valine from pyruvate: step 3/4. Functionally, functions in the biosynthesis of branched-chain amino acids. Catalyzes the dehydration of (2R,3R)-2,3-dihydroxy-3-methylpentanoate (2,3-dihydroxy-3-methylvalerate) into 2-oxo-3-methylpentanoate (2-oxo-3-methylvalerate) and of (2R)-2,3-dihydroxy-3-methylbutanoate (2,3-dihydroxyisovalerate) into 2-oxo-3-methylbutanoate (2-oxoisovalerate), the penultimate precursor to L-isoleucine and L-valine, respectively. This chain is Dihydroxy-acid dehydratase, found in Trichodesmium erythraeum (strain IMS101).